The following is a 127-amino-acid chain: Small ribosomal subunit protein bS16 (127 aa).

The interval 80-127 (GLKKRPTRNNPHKGEPGKKAQERIAAAKQAAEEAAAAKTESAPISEEV) is disordered. The segment covering 81 to 90 (LKKRPTRNNP) has biased composition (basic residues). Positions 91-101 (HKGEPGKKAQE) are enriched in basic and acidic residues. Residues 102 to 121 (RIAAAKQAAEEAAAAKTESA) are compositionally biased toward low complexity.

It belongs to the bacterial ribosomal protein bS16 family.

The chain is Small ribosomal subunit protein bS16 from Bartonella henselae (strain ATCC 49882 / DSM 28221 / CCUG 30454 / Houston 1) (Rochalimaea henselae).